Consider the following 1385-residue polypeptide: DNA-directed RNA polymerase subunit beta (1385 aa).

It belongs to the RNA polymerase beta chain family. The RNAP catalytic core consists of 2 alpha, 1 beta, 1 beta' and 1 omega subunit. When a sigma factor is associated with the core the holoenzyme is formed, which can initiate transcription.

It carries out the reaction RNA(n) + a ribonucleoside 5'-triphosphate = RNA(n+1) + diphosphate. DNA-dependent RNA polymerase catalyzes the transcription of DNA into RNA using the four ribonucleoside triphosphates as substrates. In Jannaschia sp. (strain CCS1), this protein is DNA-directed RNA polymerase subunit beta.